The sequence spans 356 residues: Protein trichome birefringence-like 41 (356 aa).

The chain crosses the membrane as a helical; Signal-anchor for type II membrane protein span at residues 12–31; the sequence is SALVLSLLLLLLLPLLHEAA. Positions 107–109 match the GDS motif motif; that stretch reads GDS. The DCXHWCLPGXXDXWN motif signature appears at 333-347; that stretch reads DCSHWCLSGVPDTWN.

This sequence belongs to the PC-esterase family. TBL subfamily.

Its subcellular location is the membrane. May act as a bridging protein that binds pectin and other cell wall polysaccharides. Probably involved in maintaining esterification of pectins. May be involved in the specific O-acetylation of cell wall polymers. This chain is Protein trichome birefringence-like 41 (TBL41), found in Arabidopsis thaliana (Mouse-ear cress).